A 257-amino-acid polypeptide reads, in one-letter code: Cytochrome c oxidase subunit 3 (257 aa).

Helical transmembrane passes span 15-35 (PWPLATGMGAFAMTSGLVKWF), 82-102 (GMILFIISEVFFFVSFFWGFF), 124-144 (FLSALLNTSILLASGVTVTWA), 156-176 (CLQGLLFTVLLGLYFSFLQGL), 194-214 (FFLATGFHGLHVLIGTIFLMI), and 235-255 (AWYWHFVDVVWLFLYLSIYWW).

The protein belongs to the cytochrome c oxidase subunit 3 family. In terms of assembly, component of the cytochrome c oxidase (complex IV, CIV), a multisubunit enzyme composed of a catalytic core of 3 subunits and several supernumerary subunits. The complex exists as a monomer or a dimer and forms supercomplexes (SCs) in the inner mitochondrial membrane with ubiquinol-cytochrome c oxidoreductase (cytochrome b-c1 complex, complex III, CIII).

It localises to the mitochondrion inner membrane. The enzyme catalyses 4 Fe(II)-[cytochrome c] + O2 + 8 H(+)(in) = 4 Fe(III)-[cytochrome c] + 2 H2O + 4 H(+)(out). Functionally, component of the cytochrome c oxidase, the last enzyme in the mitochondrial electron transport chain which drives oxidative phosphorylation. The respiratory chain contains 3 multisubunit complexes succinate dehydrogenase (complex II, CII), ubiquinol-cytochrome c oxidoreductase (cytochrome b-c1 complex, complex III, CIII) and cytochrome c oxidase (complex IV, CIV), that cooperate to transfer electrons derived from NADH and succinate to molecular oxygen, creating an electrochemical gradient over the inner membrane that drives transmembrane transport and the ATP synthase. Cytochrome c oxidase is the component of the respiratory chain that catalyzes the reduction of oxygen to water. Electrons originating from reduced cytochrome c in the intermembrane space (IMS) are transferred via the dinuclear copper A center (CU(A)) of subunit 2 and heme A of subunit 1 to the active site in subunit 1, a binuclear center (BNC) formed by heme A3 and copper B (CU(B)). The BNC reduces molecular oxygen to 2 water molecules using 4 electrons from cytochrome c in the IMS and 4 protons from the mitochondrial matrix. This is Cytochrome c oxidase subunit 3 (COIII) from Artemia franciscana (Brine shrimp).